The chain runs to 274 residues: ATP synthase subunit a (274 aa).

5 helical membrane-spanning segments follow: residues 40-60 (FWVC…VILI), 110-130 (IFVW…LVPF), 149-169 (DVNI…FYSI), 224-244 (IFIL…SVPW), and 245-265 (AIFH…LTIV).

It belongs to the ATPase A chain family. In terms of assembly, F-type ATPases have 2 components, CF(1) - the catalytic core - and CF(0) - the membrane proton channel. CF(1) has five subunits: alpha(3), beta(3), gamma(1), delta(1), epsilon(1). CF(0) has three main subunits: a(1), b(2) and c(9-12). The alpha and beta chains form an alternating ring which encloses part of the gamma chain. CF(1) is attached to CF(0) by a central stalk formed by the gamma and epsilon chains, while a peripheral stalk is formed by the delta and b chains.

It is found in the cell membrane. Functionally, key component of the proton channel; it plays a direct role in the translocation of protons across the membrane. The chain is ATP synthase subunit a from Buchnera aphidicola subsp. Baizongia pistaciae (strain Bp).